The sequence spans 329 residues: PTS-dependent dihydroxyacetone kinase 1, dihydroxyacetone-binding subunit DhaK (329 aa).

Residues 7-329 (GTDQVVEQMV…LKLPVDTIAW (323 aa)) enclose the DhaK domain. Dihydroxyacetone-binding positions include 53–56 (GSGH), lysine 104, and aspartate 109. Histidine 56 functions as the Proton acceptor in the catalytic mechanism. Histidine 218 acts as the Tele-hemiaminal-histidine intermediate in catalysis.

As to quaternary structure, homodimer. The dihydroxyacetone kinase complex is composed of a homodimer of DhaM, a homodimer of DhaK and the subunit DhaL.

It localises to the cytoplasm. It carries out the reaction dihydroxyacetone + phosphoenolpyruvate = dihydroxyacetone phosphate + pyruvate. The protein operates within polyol metabolism; glycerol degradation. Functionally, dihydroxyacetone binding subunit of the dihydroxyacetone kinase, which is responsible for the phosphoenolpyruvate (PEP)-dependent phosphorylation of dihydroxyacetone via a phosphoryl group transfer from DhaL-ATP. The protein is PTS-dependent dihydroxyacetone kinase 1, dihydroxyacetone-binding subunit DhaK of Listeria innocua serovar 6a (strain ATCC BAA-680 / CLIP 11262).